Reading from the N-terminus, the 447-residue chain is Sulfoquinovose isomerase (447 aa).

Belongs to the SqvD family.

The catalysed reaction is 6-sulfo-beta-D-quinovose = 6-deoxy-6-sulfo-D-fructose. Part of the sulfo-TK pathway, a D-sulfoquinovose degradation pathway that produces 2-hydroxyethane-1-sulfonate (isethionate). Catalyzes the isomerization of sulfoquinovose (SQ) to 6-deoxy-6-sulfo-D-fructose (SF). This chain is Sulfoquinovose isomerase, found in Clostridium sp. (strain MSTE9).